The chain runs to 262 residues: uncharacterized protein (262 aa).

A coiled-coil region spans residues 41-118; that stretch reads ELQKNEKIDK…EEKAEDFINK (78 aa).

This is an uncharacterized protein from Plasmodium falciparum (isolate 3D7).